Here is a 93-residue protein sequence, read N- to C-terminus: Small ribosomal subunit protein bS18 (93 aa).

Belongs to the bacterial ribosomal protein bS18 family. Part of the 30S ribosomal subunit. Forms a tight heterodimer with protein bS6.

In terms of biological role, binds as a heterodimer with protein bS6 to the central domain of the 16S rRNA, where it helps stabilize the platform of the 30S subunit. The polypeptide is Small ribosomal subunit protein bS18 (Variovorax paradoxus (strain S110)).